The following is a 678-amino-acid chain: Methionine--tRNA ligase (678 aa).

The short motif at proline 12–histidine 22 is the 'HIGH' region element. Zn(2+) is bound by residues cysteine 143, cysteine 146, cysteine 156, and cysteine 159. Positions lysine 328–serine 332 match the 'KMSKS' region motif. Lysine 331 is an ATP binding site. In terms of domain architecture, tRNA-binding spans aspartate 577–lysine 678.

It belongs to the class-I aminoacyl-tRNA synthetase family. MetG type 1 subfamily. As to quaternary structure, homodimer. Zn(2+) serves as cofactor.

Its subcellular location is the cytoplasm. The catalysed reaction is tRNA(Met) + L-methionine + ATP = L-methionyl-tRNA(Met) + AMP + diphosphate. In terms of biological role, is required not only for elongation of protein synthesis but also for the initiation of all mRNA translation through initiator tRNA(fMet) aminoacylation. In Acidithiobacillus ferrooxidans (strain ATCC 23270 / DSM 14882 / CIP 104768 / NCIMB 8455) (Ferrobacillus ferrooxidans (strain ATCC 23270)), this protein is Methionine--tRNA ligase.